A 281-amino-acid polypeptide reads, in one-letter code: Pantothenate synthetase (281 aa).

Position 30–37 (30–37 (MGNLHQGH)) interacts with ATP. His37 serves as the catalytic Proton donor. Gln61 provides a ligand contact to (R)-pantoate. Gln61 lines the beta-alanine pocket. Position 149-152 (149-152 (GNKD)) interacts with ATP. Gln155 serves as a coordination point for (R)-pantoate. ATP-binding positions include Ile178 and 186-189 (MSSR).

Belongs to the pantothenate synthetase family. As to quaternary structure, homodimer.

It is found in the cytoplasm. The catalysed reaction is (R)-pantoate + beta-alanine + ATP = (R)-pantothenate + AMP + diphosphate + H(+). It functions in the pathway cofactor biosynthesis; (R)-pantothenate biosynthesis; (R)-pantothenate from (R)-pantoate and beta-alanine: step 1/1. Functionally, catalyzes the condensation of pantoate with beta-alanine in an ATP-dependent reaction via a pantoyl-adenylate intermediate. This Shewanella oneidensis (strain ATCC 700550 / JCM 31522 / CIP 106686 / LMG 19005 / NCIMB 14063 / MR-1) protein is Pantothenate synthetase.